A 423-amino-acid chain; its full sequence is Serine hydroxymethyltransferase (423 aa).

Residues leucine 126 and 130 to 132 (GHL) contribute to the (6S)-5,6,7,8-tetrahydrofolate site. At lysine 235 the chain carries N6-(pyridoxal phosphate)lysine.

It belongs to the SHMT family. In terms of assembly, homodimer. Requires pyridoxal 5'-phosphate as cofactor.

It localises to the cytoplasm. It carries out the reaction (6R)-5,10-methylene-5,6,7,8-tetrahydrofolate + glycine + H2O = (6S)-5,6,7,8-tetrahydrofolate + L-serine. The protein operates within one-carbon metabolism; tetrahydrofolate interconversion. It functions in the pathway amino-acid biosynthesis; glycine biosynthesis; glycine from L-serine: step 1/1. Its function is as follows. Catalyzes the reversible interconversion of serine and glycine with tetrahydrofolate (THF) serving as the one-carbon carrier. This reaction serves as the major source of one-carbon groups required for the biosynthesis of purines, thymidylate, methionine, and other important biomolecules. Also exhibits THF-independent aldolase activity toward beta-hydroxyamino acids, producing glycine and aldehydes, via a retro-aldol mechanism. In Sorangium cellulosum (strain So ce56) (Polyangium cellulosum (strain So ce56)), this protein is Serine hydroxymethyltransferase.